The chain runs to 304 residues: WW domain-binding protein 1 (304 aa).

The tract at residues 1–26 is disordered; that stretch reads MARASSRNSSEEAWGSLQAPQQQQSP. Short sequence motifs (PPxY motif) lie at residues 159–162 and 172–176; these read PPAY and PPPPY. 2 disordered regions span residues 206–235 and 252–304; these read TNVEGVSSQQSALPHQEGEPRAGLSPVHIP and CPCP…GDIP. Residues 209–218 are compositionally biased toward polar residues; it reads EGVSSQQSAL.

Binds to the WW domain of YAP1, WWP1 and WWP2. Interacts with WWOX. Interacts with NEDD4.

The protein is WW domain-binding protein 1 (Wbp1) of Mus musculus (Mouse).